A 182-amino-acid chain; its full sequence is ATP synthase subunit delta, mitochondrial (182 aa).

The N-terminal 17 residues, 1–17 (MFRTFGRRLVSCTLPLL), are a transit peptide targeting the mitochondrion.

The protein belongs to the ATPase epsilon chain family. As to quaternary structure, F-type ATPases have 2 components, F(1) - the catalytic core - and F(o) - the membrane proton channel. F(1) has five subunits: alpha(3), beta(3), gamma(1), delta(1), epsilon(1), plus the additional subunit P18 (Tb427.05.1710) that is not present in F(1)F(o) ATP synthase from metazoa. Subunit P18 (Tb927.5.1710) interacts with the alpha subunit with a 1:1 stoichiometry; the interaction is direct. Subunit gamma is part of the central stalk. F(o) has three main subunits: a, b and c. The trypanosomal ATPase complex contains additional subunits that are not present in the F(1)F(o) ATP synthase from metazoa.

Its subcellular location is the mitochondrion. The protein resides in the mitochondrion inner membrane. Its function is as follows. Mitochondrial membrane ATP synthase (F(1)F(o) ATP synthase) produces ATP from ADP in the presence of a proton gradient across the membrane which is generated by electron transport complexes of the respiratory chain. F-type ATPases consist of two structural domains, F(1) - containing the extramembraneous catalytic core, and F(o) - containing the membrane proton channel, linked together by a central stalk and a peripheral stalk. During catalysis, ATP synthesis in the catalytic domain of F(1) is coupled via a rotary mechanism of the central stalk subunits to proton translocation. Subunits alpha and beta form the catalytic core in F(1). Rotation of the central stalk against the surrounding alpha(3)beta(3) subunits leads to hydrolysis of ATP in three separate catalytic sites on the beta subunits. Contrary to the procyclic, insect form that requires F(1)F(o) ATP synthase for ATP synthesis, the bloodstream form relies on ATP hydrolysis by F(1)F(o) ATP synthase to maintain its mitochondrial membrane potential. The sequence is that of ATP synthase subunit delta, mitochondrial from Trypanosoma brucei brucei.